We begin with the raw amino-acid sequence, 98 residues long: NADH-ubiquinone oxidoreductase chain 4L (98 aa).

The next 3 helical transmembrane spans lie at Met1 to Leu21, Ser29 to Leu49, and Ile61 to Val81.

It belongs to the complex I subunit 4L family. Core subunit of respiratory chain NADH dehydrogenase (Complex I) which is composed of 45 different subunits.

Its subcellular location is the mitochondrion inner membrane. The enzyme catalyses a ubiquinone + NADH + 5 H(+)(in) = a ubiquinol + NAD(+) + 4 H(+)(out). Its function is as follows. Core subunit of the mitochondrial membrane respiratory chain NADH dehydrogenase (Complex I) which catalyzes electron transfer from NADH through the respiratory chain, using ubiquinone as an electron acceptor. Part of the enzyme membrane arm which is embedded in the lipid bilayer and involved in proton translocation. The chain is NADH-ubiquinone oxidoreductase chain 4L (MT-ND4L) from Procavia capensis (Rock hyrax).